The sequence spans 255 residues: Ribonuclease HII (255 aa).

An RNase H type-2 domain is found at leucine 73 to leucine 255. Residues aspartate 79, glutamate 80, and aspartate 171 each coordinate a divalent metal cation.

It belongs to the RNase HII family. Requires Mn(2+) as cofactor. Mg(2+) is required as a cofactor.

The protein resides in the cytoplasm. It carries out the reaction Endonucleolytic cleavage to 5'-phosphomonoester.. Functionally, endonuclease that specifically degrades the RNA of RNA-DNA hybrids. In Clostridioides difficile (strain 630) (Peptoclostridium difficile), this protein is Ribonuclease HII.